A 404-amino-acid chain; its full sequence is Cysteine desulfurase IscS (404 aa).

Pyridoxal 5'-phosphate is bound by residues 75–76 (AT), Asn-155, Gln-183, and 203–205 (SAH). Lys-206 carries the post-translational modification N6-(pyridoxal phosphate)lysine. Thr-243 contacts pyridoxal 5'-phosphate. Cys-328 serves as the catalytic Cysteine persulfide intermediate. Cys-328 contributes to the [2Fe-2S] cluster binding site.

Belongs to the class-V pyridoxal-phosphate-dependent aminotransferase family. NifS/IscS subfamily. Homodimer. Forms a heterotetramer with IscU, interacts with other sulfur acceptors. The cofactor is pyridoxal 5'-phosphate.

It localises to the cytoplasm. It carries out the reaction (sulfur carrier)-H + L-cysteine = (sulfur carrier)-SH + L-alanine. It participates in cofactor biosynthesis; iron-sulfur cluster biosynthesis. In terms of biological role, master enzyme that delivers sulfur to a number of partners involved in Fe-S cluster assembly, tRNA modification or cofactor biosynthesis. Catalyzes the removal of elemental sulfur atoms from cysteine to produce alanine. Functions as a sulfur delivery protein for Fe-S cluster synthesis onto IscU, an Fe-S scaffold assembly protein, as well as other S acceptor proteins. This chain is Cysteine desulfurase IscS, found in Pseudomonas fluorescens (strain Pf0-1).